The following is a 251-amino-acid chain: HTH-type transcriptional regulator IolR (251 aa).

The 57-residue stretch at 1-57 (MKLMRIQEMEEYILSHGTVSLDELCQVFNVSKNTVRRDINKLTEKGAIEKVYGGVTS) folds into the HTH deoR-type domain. Positions 19 to 38 (VSLDELCQVFNVSKNTVRRD) form a DNA-binding region, H-T-H motif.

Functionally, iol operon repressor. This Bacillus subtilis (strain 168) protein is HTH-type transcriptional regulator IolR (iolR).